Consider the following 217-residue polypeptide: UPF0319 protein VP1009 (217 aa).

Positions methionine 1–alanine 21 are cleaved as a signal peptide.

This sequence belongs to the UPF0319 family.

The protein is UPF0319 protein VP1009 of Vibrio parahaemolyticus serotype O3:K6 (strain RIMD 2210633).